A 148-amino-acid polypeptide reads, in one-letter code: U5-hexatoxin-Hi1a (148 aa).

The first 21 residues, 1–21, serve as a signal peptide directing secretion; it reads MNFSVVAVALVVVLTVHFTDG. The propeptide occupies 22–38; the sequence is QETSSSLPSPPSPLPGR. The segment at 125–148 is disordered; the sequence is TPSTTVTTPTPTTETPTTETPSTP.

Contains 2 disulfide bonds. Expressed by the venom gland.

The protein localises to the secreted. In terms of biological role, probable ion channel inhibitor. In Hadronyche infensa (Fraser island funnel-web spider), this protein is U5-hexatoxin-Hi1a.